The sequence spans 698 residues: Long-chain-fatty-acid--CoA ligase 1 (698 aa).

M1 is modified (N-acetylmethionine). 3'-nitrotyrosine is present on Y9. A helical; Signal-anchor for type III membrane protein transmembrane segment spans residues 25 to 45 (LPTNTLMGFGAFAALTTFWYA). Over 46-698 (TRPKPLKPPC…IDDLYSTIKV (653 aa)) the chain is Cytoplasmic. Y84 bears the Phosphotyrosine mark. S135 carries an O-linked (GlcNAc) serine glycan. K207, K356, and K386 each carry N6-acetyllysine. A Phosphoserine modification is found at S620. K632 is subject to N6-acetyllysine.

Belongs to the ATP-dependent AMP-binding enzyme family. Mg(2+) serves as cofactor. As to expression, highly expressed in liver, heart, skeletal muscle, kidney and erythroid cells, and to a lesser extent in brain, lung, placenta and pancreas.

The protein localises to the mitochondrion outer membrane. Its subcellular location is the peroxisome membrane. The protein resides in the microsome membrane. It is found in the endoplasmic reticulum membrane. The catalysed reaction is a long-chain fatty acid + ATP + CoA = a long-chain fatty acyl-CoA + AMP + diphosphate. It catalyses the reaction (5Z,8Z,11Z,14Z)-eicosatetraenoate + ATP + CoA = (5Z,8Z,11Z,14Z)-eicosatetraenoyl-CoA + AMP + diphosphate. The enzyme catalyses 3,7,11,15-tetramethylhexadecanoate + ATP + CoA = phytanoyl-CoA + AMP + diphosphate. It carries out the reaction hexadecanoate + ATP + CoA = hexadecanoyl-CoA + AMP + diphosphate. The catalysed reaction is (E)-hexadec-2-enoate + ATP + CoA = (2E)-hexadecenoyl-CoA + AMP + diphosphate. It catalyses the reaction 2,6,10,14-tetramethylpentadecanoate + ATP + CoA = pristanoyl-CoA + AMP + diphosphate. The enzyme catalyses 14,15-epoxy-(5Z,8Z,11Z)-eicosatrienoate + ATP + CoA = 14,15-epoxy-(5Z,8Z,11Z)-eicosatrienoyl-CoA + AMP + diphosphate. It carries out the reaction 5-hydroxy-(6E,8Z,11Z,14Z)-eicosatetraenoate + ATP + CoA = 5-hydroxy-(6E,8Z,11Z,14Z)-eicosatetraenoyl-CoA + AMP + diphosphate. The catalysed reaction is 12-hydroxy-(5Z,8Z,10E,14Z)-eicosatetraenoate + ATP + CoA = 12-hydroxy-(5Z,8Z,10E,14Z)-eicosatetraenoyl-CoA + AMP + diphosphate. It catalyses the reaction 15-hydroxy-(5Z,8Z,11Z,13E)-eicosatetraenoate + ATP + CoA = 15-hydroxy-(5Z,8Z,11Z,13E)-eicosatetraenoyl-CoA + AMP + diphosphate. The enzyme catalyses (9Z)-octadecenoate + ATP + CoA = (9Z)-octadecenoyl-CoA + AMP + diphosphate. With respect to regulation, inhibited at high temperature and by arachidonate. Its function is as follows. Catalyzes the conversion of long-chain fatty acids to their active form acyl-CoAs for both synthesis of cellular lipids, and degradation via beta-oxidation. Preferentially uses palmitoleate, oleate and linoleate. Preferentially activates arachidonate than epoxyeicosatrienoic acids (EETs) or hydroxyeicosatrienoic acids (HETEs). The protein is Long-chain-fatty-acid--CoA ligase 1 of Homo sapiens (Human).